The primary structure comprises 154 residues: Aminoalkylphosphonate N-acetyltransferase (154 aa).

One can recognise an N-acetyltransferase domain in the interval 14-154 (CELRHATTED…QSHFRFTKAL (141 aa)).

As to quaternary structure, homodimer. A divalent metal cation is required as a cofactor.

It catalyses the reaction aminomethylphosphonate + acetyl-CoA = 2-N-acetamidomethylphosphonate + CoA. It carries out the reaction (S)-1-aminoethylphosphonate + acetyl-CoA = [(1S)-1-acetamidoethyl]phosphonate + CoA. Aminoalkylphosphonate N-acetyltransferase which is able to acetylate a range of aminoalkylphosphonic acids, including (S)-1-aminoethylphosphonate ((S)-1AEP) and 2-aminoethylphosphonate, using acetyl-CoA as acetyl donor. Its physiological role in S.typhimurium is unclear. However, by acetylating (S)-1AEP, PhnO would protect against the deleterious effects of (S)-1AEP, a structural analog of D-alanine that has antibacterial properties. The polypeptide is Aminoalkylphosphonate N-acetyltransferase (Salmonella typhimurium (strain LT2 / SGSC1412 / ATCC 700720)).